The following is a 579-amino-acid chain: MFS-type transporter sphD (579 aa).

A disordered region spans residues 17–62; it reads SAFAVRAEPDSEPVSEKQGTAETDAETGAGGTEVPAERNGEDDVER. A compositionally biased stretch (basic and acidic residues) spans 51-62; it reads PAERNGEDDVER. Helical transmembrane passes span 73–93, 110–130, 138–158, 168–188, 200–220, 227–247, 267–287, and 294–314; these read AFIG…ALGI, FWAN…WASI, PPLY…AVAQ, VLQG…LADM, LMAI…ALFA, WIGW…FFFL, WIGM…LSWA, and GAWQ…IFAF. N-linked (GlcNAc...) asparagine glycosylation is present at Asn-335. 6 helical membrane-spanning segments follow: residues 338–358, 367–391, 398–419, 429–449, 460–480, and 541–561; these read LVGG…LPLI, AILS…SMML, YVWI…LALF, LGLP…LLPM, GLAI…GLTI, and FQTI…TSLF.

This sequence belongs to the major facilitator superfamily.

It is found in the membrane. MFS-type transporter; part of the gene cluster that mediates the biosynthesis of sphingofungins, bioactive molecules acting as sphingolipid inhibitors via inhibiting serine palmitoyl transferase (SPT). The chain is MFS-type transporter sphD from Aspergillus fumigatus (strain CBS 144.89 / FGSC A1163 / CEA10) (Neosartorya fumigata).